We begin with the raw amino-acid sequence, 60 residues long: Large ribosomal subunit protein bL32 (60 aa).

The protein belongs to the bacterial ribosomal protein bL32 family.

The polypeptide is Large ribosomal subunit protein bL32 (Streptococcus mutans serotype c (strain ATCC 700610 / UA159)).